Reading from the N-terminus, the 1086-residue chain is Ribonuclease 3 (1086 aa).

2 disordered regions span residues 1-77 (MSDE…DSPR) and 158-233 (CHSM…LRNF). Basic residues predominate over residues 13–23 (PKHKRARRKKY). The segment covering 24-35 (QKEYQERHKEEM) has biased composition (basic and acidic residues). Residues 43–53 (FQNQPSTSSAP) show a composition bias toward polar residues. The segment covering 159 to 168 (HSMKGRKTPK) has biased composition (basic residues). Positions 181 to 190 (VSDDSNDSQD) are enriched in acidic residues. The segment covering 191-201 (EASTSEPTNRQ) has biased composition (polar residues). Basic and acidic residues predominate over residues 203 to 217 (PEADKTGEVKDEKQT). 2 consecutive RNase III domains span residues 607–781 (LDVF…LDGG) and 833–957 (FHAL…VDRG). Mg(2+) contacts are provided by E694, N767, E770, E873, D943, and E946. Residues 984–1059 (DAKSHLQQWC…AELALANLES (76 aa)) form the DRBM domain.

This sequence belongs to the ribonuclease III family. The cofactor is Mg(2+). Requires Mn(2+) as cofactor.

The protein resides in the nucleus. The enzyme catalyses Endonucleolytic cleavage to 5'-phosphomonoester.. Executes the initial step of microRNA (miRNA) processing in the nucleus, that is the cleavage of pri-miRNA to release pre-miRNA. Involved in pre-rRNA processing. Cleaves double-strand RNA and does not cleave single-strand RNA. Involved in fertility. Required for the function or synthesis of the let-7 miRNA. This is Ribonuclease 3 (drsh-1) from Caenorhabditis elegans.